Reading from the N-terminus, the 106-residue chain is uncharacterized protein (106 aa).

The next 3 membrane-spanning stretches (helical) occupy residues Ile-5–Ile-27, Ala-42–Met-64, and Leu-76–Phe-98.

It localises to the cell membrane. This is an uncharacterized protein from Archaeoglobus fulgidus (strain ATCC 49558 / DSM 4304 / JCM 9628 / NBRC 100126 / VC-16).